The sequence spans 165 residues: Large ribosomal subunit protein uL10 (165 aa).

The protein belongs to the universal ribosomal protein uL10 family. In terms of assembly, part of the ribosomal stalk of the 50S ribosomal subunit. The N-terminus interacts with L11 and the large rRNA to form the base of the stalk. The C-terminus forms an elongated spine to which L12 dimers bind in a sequential fashion forming a multimeric L10(L12)X complex.

Forms part of the ribosomal stalk, playing a central role in the interaction of the ribosome with GTP-bound translation factors. The sequence is that of Large ribosomal subunit protein uL10 from Buchnera aphidicola subsp. Acyrthosiphon pisum (strain 5A).